Reading from the N-terminus, the 122-residue chain is Large ribosomal subunit protein uL14 (122 aa).

It belongs to the universal ribosomal protein uL14 family. As to quaternary structure, part of the 50S ribosomal subunit. Forms a cluster with proteins L3 and L19. In the 70S ribosome, L14 and L19 interact and together make contacts with the 16S rRNA in bridges B5 and B8.

Its function is as follows. Binds to 23S rRNA. Forms part of two intersubunit bridges in the 70S ribosome. This is Large ribosomal subunit protein uL14 from Pseudomonas paraeruginosa (strain DSM 24068 / PA7) (Pseudomonas aeruginosa (strain PA7)).